A 279-amino-acid polypeptide reads, in one-letter code: Ribosomal RNA small subunit methyltransferase A (279 aa).

S-adenosyl-L-methionine-binding residues include Leu-42, Gly-67, Glu-88, Asp-113, and Asn-129.

The protein belongs to the class I-like SAM-binding methyltransferase superfamily. rRNA adenine N(6)-methyltransferase family. RsmA subfamily.

It localises to the cytoplasm. The catalysed reaction is adenosine(1518)/adenosine(1519) in 16S rRNA + 4 S-adenosyl-L-methionine = N(6)-dimethyladenosine(1518)/N(6)-dimethyladenosine(1519) in 16S rRNA + 4 S-adenosyl-L-homocysteine + 4 H(+). In terms of biological role, specifically dimethylates two adjacent adenosines (A1518 and A1519) in the loop of a conserved hairpin near the 3'-end of 16S rRNA in the 30S particle. May play a critical role in biogenesis of 30S subunits. The chain is Ribosomal RNA small subunit methyltransferase A from Thermotoga maritima (strain ATCC 43589 / DSM 3109 / JCM 10099 / NBRC 100826 / MSB8).